Consider the following 215-residue polypeptide: Deoxyribose-phosphate aldolase (215 aa).

The Proton donor/acceptor role is filled by Asp90. Lys152 serves as the catalytic Schiff-base intermediate with acetaldehyde. Lys181 functions as the Proton donor/acceptor in the catalytic mechanism.

The protein belongs to the DeoC/FbaB aldolase family. DeoC type 1 subfamily.

The protein localises to the cytoplasm. It catalyses the reaction 2-deoxy-D-ribose 5-phosphate = D-glyceraldehyde 3-phosphate + acetaldehyde. Its pathway is carbohydrate degradation; 2-deoxy-D-ribose 1-phosphate degradation; D-glyceraldehyde 3-phosphate and acetaldehyde from 2-deoxy-alpha-D-ribose 1-phosphate: step 2/2. Catalyzes a reversible aldol reaction between acetaldehyde and D-glyceraldehyde 3-phosphate to generate 2-deoxy-D-ribose 5-phosphate. The sequence is that of Deoxyribose-phosphate aldolase from Ureaplasma urealyticum serovar 10 (strain ATCC 33699 / Western).